The following is a 530-amino-acid chain: Hyccin 2 (530 aa).

Thr30 and Thr306 each carry phosphothreonine. Residues Ser321 and Ser341 each carry the phosphoserine modification. The interval 328–404 (RREGAEGLNG…SNESPRDSVV (77 aa)) is disordered. Over residues 353 to 373 (SGASLSSQPHGTKPPSSSQRG) the composition is skewed to polar residues. Ser430, Ser442, Ser444, and Ser491 each carry phosphoserine. The disordered stretch occupies residues 502-530 (EGKELLSPGAPLTKQSRSPSFNMQLISQV). A compositionally biased stretch (polar residues) spans 514–530 (TKQSRSPSFNMQLISQV).

This sequence belongs to the Hyccin family. As to quaternary structure, component of a phosphatidylinositol 4-kinase (PI4K) complex, composed of PI4KA, EFR3 (EFR3A or EFR3B), TTC7 (TTC7A or TTC7B) and HYCC (HYCC1 or HYCC2). As to expression, expressed in the central nervous system. Expressed at much lower level in oligodendrocytes than in neurons.

Its subcellular location is the cytoplasm. It is found in the cytosol. The protein resides in the cell membrane. Component of a complex required to localize phosphatidylinositol 4-kinase (PI4K) to the plasma membrane. In Mus musculus (Mouse), this protein is Hyccin 2 (Hycc2).